Here is a 201-residue protein sequence, read N- to C-terminus: Holliday junction branch migration complex subunit RuvA (201 aa).

Residues 1 to 64 form a domain I region; that stretch reads MFAFLRGELV…EDAQQLFGFL (64 aa). The domain II stretch occupies residues 65-143; that stretch reads DEEELQLFRL…KIQPAASGKT (79 aa). The segment at 144-154 is flexible linker; the sequence is AGAPQALQLNE. A domain III region spans residues 154 to 201; sequence EDALAALMTLGFPKPAAQKAISGILETSPGLSVEEVVRAALIAIHNNF.

It belongs to the RuvA family. In terms of assembly, homotetramer. Forms an RuvA(8)-RuvB(12)-Holliday junction (HJ) complex. HJ DNA is sandwiched between 2 RuvA tetramers; dsDNA enters through RuvA and exits via RuvB. An RuvB hexamer assembles on each DNA strand where it exits the tetramer. Each RuvB hexamer is contacted by two RuvA subunits (via domain III) on 2 adjacent RuvB subunits; this complex drives branch migration. In the full resolvosome a probable DNA-RuvA(4)-RuvB(12)-RuvC(2) complex forms which resolves the HJ.

It localises to the cytoplasm. Its function is as follows. The RuvA-RuvB-RuvC complex processes Holliday junction (HJ) DNA during genetic recombination and DNA repair, while the RuvA-RuvB complex plays an important role in the rescue of blocked DNA replication forks via replication fork reversal (RFR). RuvA specifically binds to HJ cruciform DNA, conferring on it an open structure. The RuvB hexamer acts as an ATP-dependent pump, pulling dsDNA into and through the RuvAB complex. HJ branch migration allows RuvC to scan DNA until it finds its consensus sequence, where it cleaves and resolves the cruciform DNA. The chain is Holliday junction branch migration complex subunit RuvA from Chlorobaculum tepidum (strain ATCC 49652 / DSM 12025 / NBRC 103806 / TLS) (Chlorobium tepidum).